We begin with the raw amino-acid sequence, 385 residues long: Flap endonuclease 1 (385 aa).

Residues 1–105 (MGIKGLNAII…HELSKRSARR (105 aa)) form an N-domain region. Residue D34 participates in Mg(2+) binding. Positions 47 and 71 each coordinate DNA. Mg(2+)-binding residues include D87, E156, E158, D177, and D179. The segment at 120-251 (EKLKHERRLV…VTALKLIKEH (132 aa)) is I-domain. Position 156 (E156) interacts with DNA. DNA-binding residues include G229 and D231. A Mg(2+)-binding site is contributed by D231. The segment at 338–346 (VQGRLDGFF) is interaction with PCNA. The span at 356–370 (LAAANAKAKSTKAGK) shows a compositional bias: low complexity. The tract at residues 356 to 385 (LAAANAKAKSTKAGKQATKGKVGKPGRPRK) is disordered. Residues 376-385 (KVGKPGRPRK) are compositionally biased toward basic residues.

Belongs to the XPG/RAD2 endonuclease family. FEN1 subfamily. In terms of assembly, interacts with PCNA. Three molecules of FEN1 bind to one PCNA trimer with each molecule binding to one PCNA monomer. PCNA stimulates the nuclease activity without altering cleavage specificity. Requires Mg(2+) as cofactor. In terms of processing, phosphorylated. Phosphorylation upon DNA damage induces relocalization to the nuclear plasma.

Its subcellular location is the nucleus. The protein resides in the nucleolus. The protein localises to the nucleoplasm. It is found in the mitochondrion. Its function is as follows. Structure-specific nuclease with 5'-flap endonuclease and 5'-3' exonuclease activities involved in DNA replication and repair. During DNA replication, cleaves the 5'-overhanging flap structure that is generated by displacement synthesis when DNA polymerase encounters the 5'-end of a downstream Okazaki fragment. It enters the flap from the 5'-end and then tracks to cleave the flap base, leaving a nick for ligation. Also involved in the long patch base excision repair (LP-BER) pathway, by cleaving within the apurinic/apyrimidinic (AP) site-terminated flap. Acts as a genome stabilization factor that prevents flaps from equilibrating into structures that lead to duplications and deletions. Also possesses 5'-3' exonuclease activity on nicked or gapped double-stranded DNA, and exhibits RNase H activity. Also involved in replication and repair of rDNA and in repairing mitochondrial DNA. The sequence is that of Flap endonuclease 1 from Lachancea thermotolerans (strain ATCC 56472 / CBS 6340 / NRRL Y-8284) (Yeast).